Reading from the N-terminus, the 843-residue chain is Protein translocase subunit SecA 1 (843 aa).

ATP-binding positions include Gln-91, 109–113, and Asp-498; that span reads GEGKT. Positions 799-813 are enriched in basic and acidic residues; that stretch reads EAKHVSAEDGKEKVK. Residues 799 to 826 form a disordered region; sequence EAKHVSAEDGKEKVKPKPIVKGDQVGRN. Residues Cys-829, Cys-831, Cys-840, and His-841 each coordinate Zn(2+).

Belongs to the SecA family. In terms of assembly, monomer and homodimer. Part of the essential Sec protein translocation apparatus which comprises SecA, SecYEG and auxiliary proteins SecDF. Other proteins may also be involved. The cofactor is Zn(2+).

The protein resides in the cell membrane. Its subcellular location is the cytoplasm. The catalysed reaction is ATP + H2O + cellular proteinSide 1 = ADP + phosphate + cellular proteinSide 2.. Part of the Sec protein translocase complex. Interacts with the SecYEG preprotein conducting channel. Has a central role in coupling the hydrolysis of ATP to the transfer of proteins into and across the cell membrane, serving as an ATP-driven molecular motor driving the stepwise translocation of polypeptide chains across the membrane. The chain is Protein translocase subunit SecA 1 from Staphylococcus aureus (strain N315).